A 361-amino-acid polypeptide reads, in one-letter code: Alanine racemase 2 (361 aa).

Residue Lys30 is the Proton acceptor; specific for D-alanine of the active site. Lys30 carries the post-translational modification N6-(pyridoxal phosphate)lysine. Position 122 (Arg122) interacts with substrate. Catalysis depends on Tyr256, which acts as the Proton acceptor; specific for L-alanine. Met303 provides a ligand contact to substrate.

The protein belongs to the alanine racemase family. Requires pyridoxal 5'-phosphate as cofactor.

The catalysed reaction is L-alanine = D-alanine. The protein operates within amino-acid biosynthesis; D-alanine biosynthesis; D-alanine from L-alanine: step 1/1. Its function is as follows. Catalyzes the interconversion of L-alanine and D-alanine. May also act on other amino acids. This chain is Alanine racemase 2 (alr2), found in Staphylococcus aureus (strain COL).